The primary structure comprises 721 residues: Polyphosphate kinase (721 aa).

Position 54 (Asn54) interacts with ATP. Residues Arg379 and Arg409 each contribute to the Mg(2+) site. Positions 434–468 constitute a PLD phosphodiesterase domain; that stretch reads THLKTHSKIALVVKRIGGELTSFVHLGTGNYNDKT. His439 functions as the Phosphohistidine intermediate in the catalytic mechanism. The ATP site is built by Tyr472, Arg568, and His596.

The protein belongs to the polyphosphate kinase 1 (PPK1) family. Mg(2+) is required as a cofactor. In terms of processing, an intermediate of this reaction is the autophosphorylated ppk in which a phosphate is covalently linked to a histidine residue through a N-P bond.

It catalyses the reaction [phosphate](n) + ATP = [phosphate](n+1) + ADP. In terms of biological role, catalyzes the reversible transfer of the terminal phosphate of ATP to form a long-chain polyphosphate (polyP). This is Polyphosphate kinase from Staphylococcus haemolyticus (strain JCSC1435).